A 69-amino-acid chain; its full sequence is Antimicrobial peptide ISAMP (69 aa).

The first 23 residues, 1–23 (MRAVAIFIVTLLVLECVYFVMSE), serve as a signal peptide directing secretion.

In terms of tissue distribution, expressed in the fat body, hemocytes and salivary glands of partially-fed female ticks. Not expressed in the midgut.

It localises to the secreted. In terms of biological role, has antimicrobial activity against B.cereus (MIC=5.8 ug/ml), B.subtilis (MIC=12.3 ug/ml), S.aureus (MIC=10.4 ug/ml), E.coli Edl 933 (MIC=3.2 ug/ml) and E.coli MG/655 (MIC=4.2 ug/ml). Non-hemolytic. This is Antimicrobial peptide ISAMP from Ixodes scapularis (Black-legged tick).